The following is a 151-amino-acid chain: Immunity protein YezG (151 aa).

Residues 62 to 90 (KDIFKTLLRELRELFEELRTEHRNNNDDV) adopt a coiled-coil conformation.

In terms of assembly, interacts with cognate toxin YeeF but not with non-cognate toxin YobL. The interaction probably inhibits the toxic activity of YeeF. May bind with a stoichiometry of 2:2 to YeeF.

It localises to the cytoplasm. In terms of biological role, immunity component of one of 6 LXG toxin-immunity modules in this strain. They promote kin selection, mediate competition in biofilms, and drive spatial segregation of different strains, indicating that LXG toxins may help avoid warfare between strains in biofilms. Mediates intercellular competition during biofilm formation; disruption of the operon disadvantages the bacteria, but overexpression of the cognate immunity protein restores growth in competition with wild-type. In situ neutralizes the toxic effect of cognate toxin YeeF. Probably neutralizes the ability to inhibit growth of cognate toxin YeeF. Probably does not have immunity protein activity on other LXG toxins. This chain is Immunity protein YezG (yezG), found in Bacillus subtilis (strain 168).